A 443-amino-acid chain; its full sequence is C4-dicarboxylate transport protein (443 aa).

10 helical membrane passes run 10–30 (SLYF…HFYP), 46–66 (LIKM…IAGM), 78–98 (YALL…LIVV), 130–150 (SIVG…FANG), 152–172 (ILQV…LGAY), 199–219 (PLGA…GSLV), 224–244 (LMIC…GAIC), 291–311 (VVGL…SIYL), 332–352 (ITLL…TGSG), and 354–374 (IVLA…LALI). The segment at 415 to 443 (ELASGGRPITDTRETDDLGVAEGPAPSIK) is disordered.

The protein belongs to the dicarboxylate/amino acid:cation symporter (DAACS) (TC 2.A.23) family.

It is found in the cell inner membrane. Responsible for the transport of dicarboxylates such as succinate, fumarate, and malate from the periplasm across the membrane. In Pseudomonas fluorescens (strain ATCC BAA-477 / NRRL B-23932 / Pf-5), this protein is C4-dicarboxylate transport protein.